The primary structure comprises 351 residues: tRNA N6-adenosine threonylcarbamoyltransferase (351 aa).

Fe cation-binding residues include His-111 and His-115. Substrate contacts are provided by residues 134-138 (LVSGG), Asp-167, Gly-180, and Asn-276. A Fe cation-binding site is contributed by Asp-304.

It belongs to the KAE1 / TsaD family. Fe(2+) is required as a cofactor.

The protein resides in the cytoplasm. The enzyme catalyses L-threonylcarbamoyladenylate + adenosine(37) in tRNA = N(6)-L-threonylcarbamoyladenosine(37) in tRNA + AMP + H(+). Functionally, required for the formation of a threonylcarbamoyl group on adenosine at position 37 (t(6)A37) in tRNAs that read codons beginning with adenine. Is involved in the transfer of the threonylcarbamoyl moiety of threonylcarbamoyl-AMP (TC-AMP) to the N6 group of A37, together with TsaE and TsaB. TsaD likely plays a direct catalytic role in this reaction. This Marinobacter nauticus (strain ATCC 700491 / DSM 11845 / VT8) (Marinobacter aquaeolei) protein is tRNA N6-adenosine threonylcarbamoyltransferase.